The primary structure comprises 324 residues: Phospho-N-acetylmuramoyl-pentapeptide-transferase (324 aa).

10 consecutive transmembrane segments (helical) span residues 5-25 (GLLV…PLFI), 52-72 (PTMG…IMAI), 77-97 (LGAE…IGFL), 117-137 (LLGQ…QGFD), 147-167 (ITFD…IGGS), 176-196 (LDGL…IIAV), 202-222 (AVAI…VFNA), 227-247 (VFMG…VAIL), 253-273 (LLVI…IQVI), and 302-322 (VVVT…YIGV).

This sequence belongs to the glycosyltransferase 4 family. MraY subfamily. Mg(2+) serves as cofactor.

The protein resides in the cell membrane. The enzyme catalyses UDP-N-acetyl-alpha-D-muramoyl-L-alanyl-gamma-D-glutamyl-meso-2,6-diaminopimeloyl-D-alanyl-D-alanine + di-trans,octa-cis-undecaprenyl phosphate = di-trans,octa-cis-undecaprenyl diphospho-N-acetyl-alpha-D-muramoyl-L-alanyl-D-glutamyl-meso-2,6-diaminopimeloyl-D-alanyl-D-alanine + UMP. It functions in the pathway cell wall biogenesis; peptidoglycan biosynthesis. Functionally, catalyzes the initial step of the lipid cycle reactions in the biosynthesis of the cell wall peptidoglycan: transfers peptidoglycan precursor phospho-MurNAc-pentapeptide from UDP-MurNAc-pentapeptide onto the lipid carrier undecaprenyl phosphate, yielding undecaprenyl-pyrophosphoryl-MurNAc-pentapeptide, known as lipid I. This is Phospho-N-acetylmuramoyl-pentapeptide-transferase from Bacillus cytotoxicus (strain DSM 22905 / CIP 110041 / 391-98 / NVH 391-98).